The sequence spans 468 residues: Putative ankyrin repeat protein R580 (468 aa).

ANK repeat units lie at residues 12–41 (DYFD…TLID), 189–218 (VINK…EINC), 249–278 (CHFD…KINS), 336–365 (SFDN…NINF), 367–393 (NMPT…DLEI), and 394–423 (HGTL…KFSL).

In Acanthamoeba polyphaga (Amoeba), this protein is Putative ankyrin repeat protein R580.